Consider the following 668-residue polypeptide: Transketolase (668 aa).

His-28 contacts substrate. Residues His-68 and 116–118 (GPL) contribute to the thiamine diphosphate site. Position 157 (Asp-157) interacts with Mg(2+). 2 residues coordinate thiamine diphosphate: Gly-158 and Asn-187. Asn-187 and Ile-189 together coordinate Mg(2+). Substrate contacts are provided by His-263, Arg-358, and Ser-385. Thiamine diphosphate is bound at residue His-263. Glu-412 acts as the Proton donor in catalysis. Phe-438 contacts thiamine diphosphate. Substrate contacts are provided by His-462, Asp-470, His-474, and Arg-521.

The protein belongs to the transketolase family. As to quaternary structure, homodimer. Requires Mg(2+) as cofactor. It depends on thiamine diphosphate as a cofactor.

The catalysed reaction is D-sedoheptulose 7-phosphate + D-glyceraldehyde 3-phosphate = aldehydo-D-ribose 5-phosphate + D-xylulose 5-phosphate. Functionally, catalyzes the transfer of a two-carbon ketol group from a ketose donor to an aldose acceptor, likely via a covalent intermediate with the cofactor thiamine pyrophosphate. Can use L-erythrulose as donor and D-ribose-5-phosphate as acceptor substrates, forming glycolaldehyde and D-sedoheptulose-7-phosphate. For synthetic purposes, is able to use hydroxypyruvate (HPA) as donor substrate, making the reaction irreversible due to the release of carbon dioxide, and various aldehydes as acceptor substrates, which leads to the corresponding ketoses. Thus, using hydroxypyruvate as donor and three different aldehydes as acceptors, i.e. glycolaldehyde, D-glyceraldehyde and butyraldehyde, the enzyme stereoselectively forms the corresponding products L-erythrulose, D-xylulose and (3S)-1,3-dihydroxyhexan-2-one, respectively. This chain is Transketolase, found in Geobacillus stearothermophilus (Bacillus stearothermophilus).